Reading from the N-terminus, the 310-residue chain is Zinc finger protein-like 1 (310 aa).

A B box-type; degenerate zinc finger spans residues 1 to 43 (MGLCKCPKRKVTNLFCFEHRVNVCEHCLVANHAKCIVQSYLQW). Residues 1-266 (MGLCKCPKRK…RPLTLLQRAG (266 aa)) lie on the Cytoplasmic side of the membrane. Residues 53-101 (CRLCNIPLASRETTRLVCYDLFHWACLNERAAQLPRNTAPAGYQCPSCN) form an RING-type; degenerate zinc finger. Residues 145–231 (PEPLNTSDFS…RTPGLHGDCD (87 aa)) are disordered. The segment covering 148-165 (LNTSDFSDWSSFNASSTP) has biased composition (polar residues). Residues 213–224 (KVYDTRDDDRTP) show a composition bias toward basic and acidic residues. The helical transmembrane segment at 267 to 287 (LLLLLGLLGFLALLALMSRLG) threads the bilayer. Residues 288–310 (RAAADSDPNLDPLMNPHIRVGPS) lie on the Lumenal side of the membrane.

It belongs to the ZFPL1 family. As to quaternary structure, interacts with GOLGA2/GM130. Post-translationally, phosphorylated. As to expression, expressed strongly in the exocrine pancreas.

Its subcellular location is the golgi apparatus. The protein localises to the cis-Golgi network membrane. Functionally, required for cis-Golgi integrity and efficient ER to Golgi transport. Involved in the maintenance of the integrity of the cis-Golgi, possibly via its interaction with GOLGA2/GM130. This is Zinc finger protein-like 1 (ZFPL1) from Homo sapiens (Human).